Reading from the N-terminus, the 105-residue chain is Nucleoid-associated protein RPC_4847 (105 aa).

The protein belongs to the YbaB/EbfC family. In terms of assembly, homodimer.

The protein localises to the cytoplasm. It localises to the nucleoid. Functionally, binds to DNA and alters its conformation. May be involved in regulation of gene expression, nucleoid organization and DNA protection. This is Nucleoid-associated protein RPC_4847 from Rhodopseudomonas palustris (strain BisB18).